The following is a 102-amino-acid chain: uncharacterized protein (102 aa).

Positions Met1–Gly43 are disordered. A compositionally biased stretch (polar residues) spans Ile9–Ser21. The segment covering Gly25–Gly43 has biased composition (low complexity).

This is an uncharacterized protein from Saccharomyces cerevisiae (strain ATCC 204508 / S288c) (Baker's yeast).